A 489-amino-acid polypeptide reads, in one-letter code: Aklavinone 12-hydroxylase DnrF (489 aa).

FAD-binding positions include 17-18 (LG), glutamate 37, glutamine 121, and leucine 145. Catalysis depends on tyrosine 224, which acts as the Proton acceptor. Position 308 (aspartate 308) interacts with FAD. Residue glycine 317 participates in aklavinone binding. Disordered regions lie at residues 402–428 (VAAE…RAPH) and 455–489 (EGGA…PPAN). Over residues 468–482 (RIWASASTSISSAAM) the composition is skewed to low complexity.

It belongs to the PheA/TfdB FAD monooxygenase family. In terms of assembly, monomer. It depends on FAD as a cofactor.

It carries out the reaction aklavinone + NADPH + O2 + H(+) = epsilon-rhodomycinone + NADP(+) + H2O. Its pathway is antibiotic biosynthesis; daunorubicin biosynthesis. It participates in antibiotic biosynthesis; carminomycin biosynthesis. It functions in the pathway antibiotic biosynthesis; rhodomycin biosynthesis. Involved in the biosynthesis of the anthracyclines carminomycin, rhodomycin and daunorubicin (daunomycin) which are aromatic polyketide antibiotics that exhibit high cytotoxicity and are widely applied in the chemotherapy of a variety of cancers. Catalyzes the incorporation of a hydroxyl group at position C-11 of aklavinone, resulting in epsilon-rhodomycinone. It cannot accept substrates glycosylated at position C-7. It can also hydroxylate 11-deoxycarminomycinone and can use both NAD or NADP. The sequence is that of Aklavinone 12-hydroxylase DnrF (dnrF) from Streptomyces peucetius.